A 74-amino-acid polypeptide reads, in one-letter code: MGTFSIWHWLIVLLVVVVVFGTKKLRNIGTDLGSAVKGFKDGMKDAATDTAPAGQVANQSTADQTIDVQTKPKG.

A helical transmembrane segment spans residues 1-21 (MGTFSIWHWLIVLLVVVVVFG). A disordered region spans residues 50 to 74 (TAPAGQVANQSTADQTIDVQTKPKG). Residues 56–68 (VANQSTADQTIDV) are compositionally biased toward polar residues.

Belongs to the TatA/E family. As to quaternary structure, the Tat system comprises two distinct complexes: a TatABC complex, containing multiple copies of TatA, TatB and TatC subunits, and a separate TatA complex, containing only TatA subunits. Substrates initially bind to the TatABC complex, which probably triggers association of the separate TatA complex to form the active translocon.

Its subcellular location is the cell inner membrane. In terms of biological role, part of the twin-arginine translocation (Tat) system that transports large folded proteins containing a characteristic twin-arginine motif in their signal peptide across membranes. TatA could form the protein-conducting channel of the Tat system. The polypeptide is Sec-independent protein translocase protein TatA (Verminephrobacter eiseniae (strain EF01-2)).